A 256-amino-acid polypeptide reads, in one-letter code: Thiazole synthase (256 aa).

The active-site Schiff-base intermediate with DXP is K95. Residues G156, 182-183 (AG), and 204-205 (NT) contribute to the 1-deoxy-D-xylulose 5-phosphate site.

It belongs to the ThiG family. Homotetramer. Forms heterodimers with either ThiH or ThiS.

The protein resides in the cytoplasm. The catalysed reaction is [ThiS sulfur-carrier protein]-C-terminal-Gly-aminoethanethioate + 2-iminoacetate + 1-deoxy-D-xylulose 5-phosphate = [ThiS sulfur-carrier protein]-C-terminal Gly-Gly + 2-[(2R,5Z)-2-carboxy-4-methylthiazol-5(2H)-ylidene]ethyl phosphate + 2 H2O + H(+). The protein operates within cofactor biosynthesis; thiamine diphosphate biosynthesis. Catalyzes the rearrangement of 1-deoxy-D-xylulose 5-phosphate (DXP) to produce the thiazole phosphate moiety of thiamine. Sulfur is provided by the thiocarboxylate moiety of the carrier protein ThiS. In vitro, sulfur can be provided by H(2)S. This chain is Thiazole synthase, found in Escherichia coli O8 (strain IAI1).